Reading from the N-terminus, the 440-residue chain is O-glycoside alpha-1,2-mannosyltransferase homolog 4 (440 aa).

At M1 to F35 the chain is on the cytoplasmic side. Residues V36–I56 form a helical; Signal-anchor for type II membrane protein membrane-spanning segment. The Lumenal segment spans residues Y57–E440. Residue E336 is the Nucleophile of the active site.

The protein belongs to the glycosyltransferase 15 family.

It localises to the cytoplasm. The protein localises to the nucleus. It is found in the golgi apparatus membrane. Its function is as follows. Probable mannosyltransferase involved in O-glycosylation of cell wall and secreted proteins. Transfers an alpha-D-mannosyl residue from GDP-mannose into lipid-linked oligosaccharide, forming an alpha-(1-&gt;2)-D-mannosyl-D-mannose linkage. The sequence is that of O-glycoside alpha-1,2-mannosyltransferase homolog 4 (omh4) from Schizosaccharomyces pombe (strain 972 / ATCC 24843) (Fission yeast).